The chain runs to 244 residues: Phosphoadenosine 5'-phosphosulfate reductase (244 aa).

Cys239 (nucleophile; cysteine thiosulfonate intermediate) is an active-site residue.

It belongs to the PAPS reductase family. CysH subfamily.

Its subcellular location is the cytoplasm. The catalysed reaction is [thioredoxin]-disulfide + sulfite + adenosine 3',5'-bisphosphate + 2 H(+) = [thioredoxin]-dithiol + 3'-phosphoadenylyl sulfate. The protein operates within sulfur metabolism; hydrogen sulfide biosynthesis; sulfite from sulfate: step 3/3. Catalyzes the formation of sulfite from phosphoadenosine 5'-phosphosulfate (PAPS) using thioredoxin as an electron donor. This is Phosphoadenosine 5'-phosphosulfate reductase from Escherichia coli (strain K12 / MC4100 / BW2952).